Reading from the N-terminus, the 334-residue chain is Thiamine-binding periplasmic protein (334 aa).

Positions 1–23 are cleaved as a signal peptide; sequence MRLLSLLTFSLFAVIGLAPAAQA. Thiamine-binding positions include 64–65, 166–167, tryptophan 202, and 220–223; these read DG, AT, and YTTS.

Belongs to the bacterial solute-binding protein 1 family. The complex is composed of two ATP-binding proteins (ThiQ), two transmembrane proteins (ThiP) and a solute-binding protein (ThiB).

The protein localises to the periplasm. Part of the ABC transporter complex ThiBPQ involved in thiamine import. The polypeptide is Thiamine-binding periplasmic protein (thiB) (Brucella melitensis biotype 1 (strain ATCC 23456 / CCUG 17765 / NCTC 10094 / 16M)).